The following is a 286-amino-acid chain: MQAFFRKPKKFVTLTSKEQRVDVPVGLMTKCPKCKLIQYTKQLEANLKVCVCGYHHPLTATERFEQLFDAGTITYFDLPAVKADPLDFQDYPEKLKGDQVRTGLEEAIVCGVGQVNGYPLVACVMDARFRMGSMGAAVGAAISEAIRYATKERLPVTIFSASGGARMQEGMVSLMQMAKSSLFLKQHSDAGLLYVSCMTHPTTGGVSASFAMLGDFNIAEPGALIGFAGRRIIEQTIREKLPEDFQTSEFLLQAGQLDDVVSRHDLKTYYTRILMMHSEETNHATI.

Residues 27–286 enclose the CoA carboxyltransferase N-terminal domain; that stretch reads LMTKCPKCKL…HSEETNHATI (260 aa). Residues Cys-31, Cys-34, Cys-50, and Cys-52 each coordinate Zn(2+). The C4-type zinc-finger motif lies at 31-52; sequence CPKCKLIQYTKQLEANLKVCVC.

This sequence belongs to the AccD/PCCB family. Acetyl-CoA carboxylase is a heterohexamer composed of biotin carboxyl carrier protein (AccB), biotin carboxylase (AccC) and two subunits each of ACCase subunit alpha (AccA) and ACCase subunit beta (AccD). The cofactor is Zn(2+).

The protein resides in the cytoplasm. It catalyses the reaction N(6)-carboxybiotinyl-L-lysyl-[protein] + acetyl-CoA = N(6)-biotinyl-L-lysyl-[protein] + malonyl-CoA. The protein operates within lipid metabolism; malonyl-CoA biosynthesis; malonyl-CoA from acetyl-CoA: step 1/1. Component of the acetyl coenzyme A carboxylase (ACC) complex. Biotin carboxylase (BC) catalyzes the carboxylation of biotin on its carrier protein (BCCP) and then the CO(2) group is transferred by the transcarboxylase to acetyl-CoA to form malonyl-CoA. This is Acetyl-coenzyme A carboxylase carboxyl transferase subunit beta from Exiguobacterium sibiricum (strain DSM 17290 / CCUG 55495 / CIP 109462 / JCM 13490 / 255-15).